Reading from the N-terminus, the 1600-residue chain is THO complex subunit 2 (1600 aa).

An anchor domain; interaction with THOC5 and THOC7 region spans residues 1–163 (MAAAAVVVPA…KLFYKQQKFN (163 aa)). The interval 164–534 (LLREENEGYA…GQWKNETYNS (371 aa)) is bow domain; interaction with THOC1 dock domain and THOC3. Positions 293–339 (NCIMDEHKREIAEAKQIVRKLTMVVLSSEKMDDREKEKEKEEEKVEK) form a coiled coil. Residues 321–341 (EKMDDREKEKEKEEEKVEKPP) are disordered. The interval 535–686 (HPLLVKVKAQ…LILKEVVQKM (152 aa)) is MIF4G domain; interaction with THOC3 and DDX39B. Residues 687 to 1174 (AGIEITEEMT…LAMGYSGQLK (488 aa)) are stern domain. Positions 896-965 (HTSYEREVNK…LKLEKDNWLL (70 aa)) form a coiled coil. A Nuclear localization signal motif is present at residues 923–928 (KKKKEK). The segment at 1175-1597 (SRKSYMIPEN…FHLDVFSQYN (423 aa)) is charged domain. Residues 1184-1600 (NEFHHKDPSP…DVFSQYNGKL (417 aa)) are disordered. Residues 1208-1217 (PSPSSTGSTS) are compositionally biased toward low complexity. Over residues 1218–1234 (KSDESSAEETDKSRERS) the composition is skewed to basic and acidic residues. Phosphoserine is present on S1222. Positions 1251-1263 (GNSSNGNSGSNSN) are enriched in low complexity. Basic and acidic residues-rich tracts occupy residues 1265 to 1285 (AVKENDKEKGKEKEKEKKEKT), 1294 to 1343 (ILGK…EKFK), and 1353 to 1383 (SSQEREREKEPSRERDIAKEMKSKENVKGGE). Position 1385 is a phosphothreonine (T1385). Phosphoserine is present on residues S1390, S1393, and S1417. Over residues 1416–1425 (PSPSHSSTVK) the composition is skewed to polar residues. At T1443 the chain carries Phosphothreonine. Positions 1449–1504 (KSKEREMDKKDLDKSRERSREREKKDEKDRKERKRDHSNSDREVPPDLTKRRKEEN) are enriched in basic and acidic residues. 3 positions are modified to phosphoserine: S1450, S1486, and S1516. Residues 1464–1491 (RERSREREKKDEKDRKERKRDHSNSDRE) are a coiled coil. The span at 1524 to 1585 (NEKDKEKNKS…SSGGKEEKKQ (62 aa)) shows a compositional bias: basic and acidic residues.

This sequence belongs to the THOC2 family. In terms of assembly, component of the THO subcomplex, which is composed of THOC1, THOC2, THOC3, THOC5, THOC6 and THOC7. The THO subcomplex interacts with DDX39B to form the THO-DDX39B complex which multimerizes into a 28-subunit tetrameric assembly. Component of the transcription/export (TREX) complex at least composed of ALYREF/THOC4, DDX39B, SARNP/CIP29, CHTOP and the THO subcomplex; in the complex interacts with THOC1, THOC3, THOC5, THOC7 and DDX39B. TREX seems to have a dynamic structure involving ATP-dependent remodeling. Interacts with POLDIP3 and ZC3H11A.

It is found in the nucleus. It localises to the nucleus speckle. The protein localises to the cytoplasm. Its function is as follows. Component of the THO subcomplex of the TREX complex which is thought to couple mRNA transcription, processing and nuclear export, and which specifically associates with spliced mRNA and not with unspliced pre-mRNA. Required for efficient export of polyadenylated RNA and spliced mRNA. The THOC1-THOC2-THOC3 core complex alone is sufficient to bind export factor NXF1-NXT1 and promote ATPase activity of DDX39B; in the complex THOC2 is the only component that directly interacts with DDX39B. TREX is recruited to spliced mRNAs by a transcription-independent mechanism, binds to mRNA upstream of the exon-junction complex (EJC) and is recruited in a splicing- and cap-dependent manner to a region near the 5' end of the mRNA where it functions in mRNA export to the cytoplasm via the TAP/NXF1 pathway. Required for NXF1 localization to the nuclear rim. THOC2 (and probably the THO complex) is involved in releasing mRNA from nuclear speckle domains. Plays a role for proper neuronal development. This Plecturocebus moloch (Dusky titi monkey) protein is THO complex subunit 2 (THOC2).